Here is a 273-residue protein sequence, read N- to C-terminus: MIRVAVTGACGRMGSGIIRRVLEEEDMELVAAIEAPGTPLRGRDIGEFTGRGSVGVEVTDASNLADTLAETEPDVLVDFTVASAAVETIKTSTEAGVNLVVGTTGFSEEEMQTVRDCIERSGVRAVIAPNMAVGVNVFFKVLRDLAPILSDYDVEIIEAHHRHKKDAPSGTAVRALEVISEATGRRASEVAVHGRSGLTGERSRDEIGVHAVRGGDIVGDHIVLFAGDGERLEIVHRAHSRDAFIGGVIRAIRFIEDAEPGRIMDMGDVLGIN.

Residues 8 to 13, glutamate 34, 102 to 104, and 128 to 131 contribute to the NAD(+) site; these read GACGRM, GTT, and APNM. The active-site Proton donor/acceptor is the histidine 160. Residue histidine 161 coordinates (S)-2,3,4,5-tetrahydrodipicolinate. The active-site Proton donor is the lysine 164. Residue 170 to 171 coordinates (S)-2,3,4,5-tetrahydrodipicolinate; it reads GT.

The protein belongs to the DapB family.

The protein localises to the cytoplasm. The enzyme catalyses (S)-2,3,4,5-tetrahydrodipicolinate + NAD(+) + H2O = (2S,4S)-4-hydroxy-2,3,4,5-tetrahydrodipicolinate + NADH + H(+). It catalyses the reaction (S)-2,3,4,5-tetrahydrodipicolinate + NADP(+) + H2O = (2S,4S)-4-hydroxy-2,3,4,5-tetrahydrodipicolinate + NADPH + H(+). The protein operates within amino-acid biosynthesis; L-lysine biosynthesis via DAP pathway; (S)-tetrahydrodipicolinate from L-aspartate: step 4/4. Functionally, catalyzes the conversion of 4-hydroxy-tetrahydrodipicolinate (HTPA) to tetrahydrodipicolinate. This is 4-hydroxy-tetrahydrodipicolinate reductase from Methanothermobacter thermautotrophicus (strain ATCC 29096 / DSM 1053 / JCM 10044 / NBRC 100330 / Delta H) (Methanobacterium thermoautotrophicum).